The primary structure comprises 524 residues: Lysine--tRNA ligase (524 aa).

Positions 433 and 440 each coordinate Mg(2+).

It belongs to the class-II aminoacyl-tRNA synthetase family. As to quaternary structure, homodimer. Requires Mg(2+) as cofactor.

The protein localises to the cytoplasm. It catalyses the reaction tRNA(Lys) + L-lysine + ATP = L-lysyl-tRNA(Lys) + AMP + diphosphate. The sequence is that of Lysine--tRNA ligase from Colwellia psychrerythraea (strain 34H / ATCC BAA-681) (Vibrio psychroerythus).